Consider the following 375-residue polypeptide: Chaperone protein DnaJ (375 aa).

The J domain maps to D5–G69. Residues G132–R214 form a CR-type zinc finger. Positions 145, 148, 162, 165, 188, 191, 202, and 205 each coordinate Zn(2+). CXXCXGXG motif repeat units lie at residues C145–G152, C162–G169, C188–G195, and C202–G209.

Belongs to the DnaJ family. As to quaternary structure, homodimer. The cofactor is Zn(2+).

The protein resides in the cytoplasm. In terms of biological role, participates actively in the response to hyperosmotic and heat shock by preventing the aggregation of stress-denatured proteins and by disaggregating proteins, also in an autonomous, DnaK-independent fashion. Unfolded proteins bind initially to DnaJ; upon interaction with the DnaJ-bound protein, DnaK hydrolyzes its bound ATP, resulting in the formation of a stable complex. GrpE releases ADP from DnaK; ATP binding to DnaK triggers the release of the substrate protein, thus completing the reaction cycle. Several rounds of ATP-dependent interactions between DnaJ, DnaK and GrpE are required for fully efficient folding. Also involved, together with DnaK and GrpE, in the DNA replication of plasmids through activation of initiation proteins. This Bacillus licheniformis (strain ATCC 14580 / DSM 13 / JCM 2505 / CCUG 7422 / NBRC 12200 / NCIMB 9375 / NCTC 10341 / NRRL NRS-1264 / Gibson 46) protein is Chaperone protein DnaJ.